Reading from the N-terminus, the 205-residue chain is Cerebellin-3 (205 aa).

The signal sequence occupies residues 1 to 32 (MLGTKRHWPPGPSLSLELPLALTLLALRAGWA). In terms of domain architecture, C1q spans 67–205 (APPGRVAFAA…SFSGFLIFPL (139 aa)). Residue Asn-90 is glycosylated (N-linked (GlcNAc...) asparagine).

Heterohexamer; disulfide-linked heterotrimers. Interacts with CBLN1. May also form oligomers with CBLN2 and CBLN4.

It is found in the endoplasmic reticulum. The protein resides in the golgi apparatus. Its subcellular location is the cis-Golgi network. The protein localises to the secreted. It localises to the synapse. Its function is as follows. May be involved in synaptic functions in the CNS. The sequence is that of Cerebellin-3 (CBLN3) from Bos taurus (Bovine).